Consider the following 140-residue polypeptide: Phosphoribosyl-AMP cyclohydrolase (140 aa).

Asp84 provides a ligand contact to Mg(2+). Cys85 lines the Zn(2+) pocket. Positions 86 and 88 each coordinate Mg(2+). Zn(2+)-binding residues include Cys101 and Cys108.

This sequence belongs to the PRA-CH family. Homodimer. Mg(2+) serves as cofactor. It depends on Zn(2+) as a cofactor.

It localises to the cytoplasm. The catalysed reaction is 1-(5-phospho-beta-D-ribosyl)-5'-AMP + H2O = 1-(5-phospho-beta-D-ribosyl)-5-[(5-phospho-beta-D-ribosylamino)methylideneamino]imidazole-4-carboxamide. It participates in amino-acid biosynthesis; L-histidine biosynthesis; L-histidine from 5-phospho-alpha-D-ribose 1-diphosphate: step 3/9. Catalyzes the hydrolysis of the adenine ring of phosphoribosyl-AMP. This Chloroherpeton thalassium (strain ATCC 35110 / GB-78) protein is Phosphoribosyl-AMP cyclohydrolase.